Reading from the N-terminus, the 166-residue chain is Large ribosomal subunit protein uL10 (166 aa).

The protein belongs to the universal ribosomal protein uL10 family. Part of the ribosomal stalk of the 50S ribosomal subunit. The N-terminus interacts with L11 and the large rRNA to form the base of the stalk. The C-terminus forms an elongated spine to which L12 dimers bind in a sequential fashion forming a multimeric L10(L12)X complex.

In terms of biological role, forms part of the ribosomal stalk, playing a central role in the interaction of the ribosome with GTP-bound translation factors. The protein is Large ribosomal subunit protein uL10 of Bacillus pumilus (strain SAFR-032).